The primary structure comprises 145 residues: Aminoglycoside N(6')-acetyltransferase type 1 (145 aa).

The 145-residue stretch at 1 to 145 (MNIKPASEAS…KVVYFSKKID (145 aa)) folds into the N-acetyltransferase domain. 3 residues coordinate substrate: tryptophan 22, tyrosine 65, and glutamate 78. An acetyl-CoA-binding site is contributed by 80–82 (IYV). Aspartate 114 contacts substrate. Asparagine 119 contributes to the acetyl-CoA binding site. A substrate-binding site is contributed by glutamate 135.

As to quaternary structure, homodimer.

The catalysed reaction is kanamycin B + acetyl-CoA = N(6')-acetylkanamycin B + CoA + H(+). Catalyzes the transfer of an acetyl group from acetyl-CoA to the 6'-amino group of aminoglycoside molecules conferring resistance to antibiotics containing the purpurosamine ring including amikacin, kanamycin, tobramycin and netilmicin. This Acinetobacter haemolyticus protein is Aminoglycoside N(6')-acetyltransferase type 1.